The following is a 193-amino-acid chain: Orotate phosphoribosyltransferase (193 aa).

5-phospho-alpha-D-ribose 1-diphosphate-binding positions include Arg-107, Lys-108, Lys-111, His-113, and 133-141 (EDVITSGGS). Thr-137 and Arg-165 together coordinate orotate.

It belongs to the purine/pyrimidine phosphoribosyltransferase family. PyrE subfamily. As to quaternary structure, homodimer. Mg(2+) is required as a cofactor.

The catalysed reaction is orotidine 5'-phosphate + diphosphate = orotate + 5-phospho-alpha-D-ribose 1-diphosphate. It functions in the pathway pyrimidine metabolism; UMP biosynthesis via de novo pathway; UMP from orotate: step 1/2. Catalyzes the transfer of a ribosyl phosphate group from 5-phosphoribose 1-diphosphate to orotate, leading to the formation of orotidine monophosphate (OMP). The polypeptide is Orotate phosphoribosyltransferase (Rhodopirellula baltica (strain DSM 10527 / NCIMB 13988 / SH1)).